The following is a 249-amino-acid chain: Ciliogenesis and planar polarity effector 2 (249 aa).

A small GTPase-like region spans residues 46-249; that stretch reads PADVAAYKVF…VIAGLVGGAE (204 aa). GTP is bound by residues 58–65 and 171–174; these read GKSGVGKT and TKLD.

Belongs to the small GTPase superfamily. Rab family. As to quaternary structure, interacts with fuz.

Its subcellular location is the cytoplasm. The protein localises to the cytoskeleton. It localises to the cilium basal body. In terms of biological role, potential effector of the planar cell polarity signaling pathway. Plays a role in targeted membrane trafficking most probably at the level of vesicle fusion with membranes. Involved in cilium biogenesis by regulating the transport of cargo proteins to the basal body and to the apical tips of cilia. More generally involved in exocytosis in secretory cells. The sequence is that of Ciliogenesis and planar polarity effector 2 from Xenopus laevis (African clawed frog).